A 70-amino-acid chain; its full sequence is Large ribosomal subunit protein eL24 (70 aa).

Cys-6, Cys-9, Cys-32, and Cys-36 together coordinate Zn(2+). A C4-type zinc finger spans residues 6-36; the sequence is CSYCGRPIPPGYGIMYVRVDGVVLRFCSRRC.

It belongs to the eukaryotic ribosomal protein eL24 family. Part of the 50S ribosomal subunit. Forms a cluster with proteins L3 and L14. It depends on Zn(2+) as a cofactor.

Its function is as follows. Binds to the 23S rRNA. This Caldivirga maquilingensis (strain ATCC 700844 / DSM 13496 / JCM 10307 / IC-167) protein is Large ribosomal subunit protein eL24.